The primary structure comprises 150 residues: Large ribosomal subunit protein bL9 (150 aa).

Belongs to the bacterial ribosomal protein bL9 family.

Its function is as follows. Binds to the 23S rRNA. In Aromatoleum aromaticum (strain DSM 19018 / LMG 30748 / EbN1) (Azoarcus sp. (strain EbN1)), this protein is Large ribosomal subunit protein bL9.